The chain runs to 540 residues: Intestinal-type alkaline phosphatase 1 (540 aa).

A signal peptide spans 1-20 (MQGDWVLLLLLGLRIHLSFG). Mg(2+) is bound at residue aspartate 62. Zn(2+) contacts are provided by aspartate 62 and serine 112. Catalysis depends on serine 112, which acts as the Phosphoserine intermediate. A disulfide bridge connects residues cysteine 141 and cysteine 203. The N-linked (GlcNAc...) asparagine glycan is linked to asparagine 142. Serine 175 is a Mg(2+) binding site. Ca(2+)-binding residues include glutamate 236, phenylalanine 289, and glutamate 290. N-linked (GlcNAc...) asparagine glycosylation is present at asparagine 301. Ca(2+) is bound at residue aspartate 305. Mg(2+) is bound at residue glutamate 331. Positions 336, 340, 377, and 378 each coordinate Zn(2+). N-linked (GlcNAc...) asparagine glycosylation is present at asparagine 428. A Zn(2+)-binding site is contributed by histidine 452. A disulfide bridge links cysteine 487 with cysteine 494. A lipid anchor (GPI-anchor amidated asparagine) is attached at asparagine 511. The propeptide at 512-540 (SAITMNNVLLSLQLLVSMLLLVGTALVVS) is removed in mature form.

This sequence belongs to the alkaline phosphatase family. Homodimer. It depends on Mg(2+) as a cofactor. Requires Zn(2+) as cofactor. Ca(2+) is required as a cofactor.

It is found in the cell membrane. It catalyses the reaction a phosphate monoester + H2O = an alcohol + phosphate. Functionally, alkaline phosphatase that can hydrolyze various phosphate compounds. In Rattus norvegicus (Rat), this protein is Intestinal-type alkaline phosphatase 1 (Alpi).